Reading from the N-terminus, the 95-residue chain is MRDARDVLKRPVISEKSVGLIEENKYSFWVDTAANKIEIKNAVEKMFKVKVVDVRTINVDGKKKRVGKHVGRTADRKKAIVTLKAGDRIEGFAGL.

This sequence belongs to the universal ribosomal protein uL23 family. As to quaternary structure, part of the 50S ribosomal subunit. Contacts protein L29, and trigger factor when it is bound to the ribosome.

One of the early assembly proteins it binds 23S rRNA. One of the proteins that surrounds the polypeptide exit tunnel on the outside of the ribosome. Forms the main docking site for trigger factor binding to the ribosome. In Desulfitobacterium hafniense (strain DSM 10664 / DCB-2), this protein is Large ribosomal subunit protein uL23.